Here is a 463-residue protein sequence, read N- to C-terminus: Glutamate--tRNA ligase 1 (463 aa).

A 'HIGH' region motif is present at residues 10–20 (PSPTGYLHIGG). The 'KMSKS' region motif lies at 238-242 (KLSKR). Lysine 241 is a binding site for ATP.

It belongs to the class-I aminoacyl-tRNA synthetase family. Glutamate--tRNA ligase type 1 subfamily. Monomer.

It localises to the cytoplasm. It carries out the reaction tRNA(Glu) + L-glutamate + ATP = L-glutamyl-tRNA(Glu) + AMP + diphosphate. In terms of biological role, catalyzes the attachment of glutamate to tRNA(Glu) in a two-step reaction: glutamate is first activated by ATP to form Glu-AMP and then transferred to the acceptor end of tRNA(Glu). The polypeptide is Glutamate--tRNA ligase 1 (Helicobacter pylori (strain HPAG1)).